Reading from the N-terminus, the 284-residue chain is D-tagatose-1,6-bisphosphate aldolase subunit GatY (284 aa).

The Proton donor role is filled by Asp82. Zn(2+) is bound by residues His83 and His180. Gly181 is a binding site for dihydroxyacetone phosphate. Residue His208 participates in Zn(2+) binding. Residues 209–211 (GAS) and 230–233 (NVAT) contribute to the dihydroxyacetone phosphate site.

Belongs to the class II fructose-bisphosphate aldolase family. TagBP aldolase GatY subfamily. In terms of assembly, forms a complex with GatZ. It depends on Zn(2+) as a cofactor.

The catalysed reaction is D-tagatofuranose 1,6-bisphosphate = D-glyceraldehyde 3-phosphate + dihydroxyacetone phosphate. It functions in the pathway carbohydrate metabolism; D-tagatose 6-phosphate degradation; D-glyceraldehyde 3-phosphate and glycerone phosphate from D-tagatose 6-phosphate: step 2/2. Functionally, catalytic subunit of the tagatose-1,6-bisphosphate aldolase GatYZ, which catalyzes the reversible aldol condensation of dihydroxyacetone phosphate (DHAP or glycerone-phosphate) with glyceraldehyde 3-phosphate (G3P) to produce tagatose 1,6-bisphosphate (TBP). Requires GatZ subunit for full activity and stability. Is involved in the catabolism of galactitol. The protein is D-tagatose-1,6-bisphosphate aldolase subunit GatY of Shigella sonnei (strain Ss046).